Consider the following 371-residue polypeptide: Methionine import ATP-binding protein MetN (371 aa).

The 242-residue stretch at 29–270 (IRIEGVRKVY…PRHEVTRRFV (242 aa)) folds into the ABC transporter domain. 67–74 (GRSGAGKS) lines the ATP pocket.

The protein belongs to the ABC transporter superfamily. Methionine importer (TC 3.A.1.24) family. In terms of assembly, the complex is composed of two ATP-binding proteins (MetN), two transmembrane proteins (MetI) and a solute-binding protein (MetQ).

Its subcellular location is the cell inner membrane. It catalyses the reaction L-methionine(out) + ATP + H2O = L-methionine(in) + ADP + phosphate + H(+). The enzyme catalyses D-methionine(out) + ATP + H2O = D-methionine(in) + ADP + phosphate + H(+). Part of the ABC transporter complex MetNIQ involved in methionine import. Responsible for energy coupling to the transport system. The chain is Methionine import ATP-binding protein MetN from Rhodopseudomonas palustris (strain BisA53).